The chain runs to 284 residues: MKQKVVSIGDINVANDLPFVLFGGMNVLESRDLAMRICEHYVTVTQKLGIPYVFKASFDKANRSSIHSYRGPGLEEGMKIFQELKQTFGVKIITDVHTAEQAQPVADVVDVIQLPAFLARQTDLVEAMAKTGAVINVKKPQFISPGQIGNIVDKFKEGGNEQVILCDRGTNFGYDNLVVDMLGFGVMKKVSGNAPVIFDVTHALQCRDPFGAASSGRRAQVTELARAGMATGLAGLFIEAHPDPENAKCDGPSALPLAKLEAFLTQIKAIDDLVKSFPELDTEH.

The protein belongs to the KdsA family.

The protein localises to the cytoplasm. It carries out the reaction D-arabinose 5-phosphate + phosphoenolpyruvate + H2O = 3-deoxy-alpha-D-manno-2-octulosonate-8-phosphate + phosphate. It participates in carbohydrate biosynthesis; 3-deoxy-D-manno-octulosonate biosynthesis; 3-deoxy-D-manno-octulosonate from D-ribulose 5-phosphate: step 2/3. Its pathway is bacterial outer membrane biogenesis; lipopolysaccharide biosynthesis. The sequence is that of 2-dehydro-3-deoxyphosphooctonate aldolase from Cronobacter sakazakii (strain ATCC BAA-894) (Enterobacter sakazakii).